A 159-amino-acid chain; its full sequence is NADH-quinone oxidoreductase subunit I (159 aa).

2 4Fe-4S ferredoxin-type domains span residues 51-80 and 90-119; these read RRYENGEERCIACKLCEAICPAQAIVIEAD and TRYDIDMTKCIYCGLCQEACPVDAIVEGPN. [4Fe-4S] cluster is bound by residues Cys-60, Cys-63, Cys-66, Cys-70, Cys-99, Cys-102, Cys-105, and Cys-109.

The protein belongs to the complex I 23 kDa subunit family. In terms of assembly, NDH-1 is composed of 14 different subunits. Subunits NuoA, H, J, K, L, M, N constitute the membrane sector of the complex. Requires [4Fe-4S] cluster as cofactor.

It localises to the cell inner membrane. The enzyme catalyses a quinone + NADH + 5 H(+)(in) = a quinol + NAD(+) + 4 H(+)(out). In terms of biological role, NDH-1 shuttles electrons from NADH, via FMN and iron-sulfur (Fe-S) centers, to quinones in the respiratory chain. The immediate electron acceptor for the enzyme in this species is believed to be ubiquinone. Couples the redox reaction to proton translocation (for every two electrons transferred, four hydrogen ions are translocated across the cytoplasmic membrane), and thus conserves the redox energy in a proton gradient. In Rickettsia bellii (strain OSU 85-389), this protein is NADH-quinone oxidoreductase subunit I.